A 289-amino-acid polypeptide reads, in one-letter code: Early E1A protein (289 aa).

The interval P41–L49 is interaction with RB1 in competition with E2F1. Positions E76–E140 are interaction with UBE2I. The disordered stretch occupies residues T82–L107. The span at P84–P93 shows a compositional bias: pro residues. S89 is modified (phosphoserine; by host). The PXLXP motif, interaction with host ZMYND11 motif lies at P113 to P117. Positions L122 to E126 match the LXCXE motif, interaction with host RB1 and TMEM173/STING motif. A zinc finger lies at C154–C174. The disordered stretch occupies residues V187–P245. Phosphoserine; by host occurs at positions 219 and 231. Positions S219–S237 are enriched in polar residues. The short motif at R258–P289 is the Bipartite nuclear localization signal element. The PXDLS motif, CTBP-binding motif lies at P279 to S283.

This sequence belongs to the adenoviridae E1A protein family. Interacts with host UBE2I; this interaction interferes with polySUMOylation. Interacts with host RB1; this interaction induces the aberrant dissociation of RB1-E2F1 complex thereby disrupting the activity of RB1 and activating E2F1-regulated genes. Interacts with host ATF7; the interaction enhances ATF7-mediated viral transactivation activity which requires the zinc binding domains of both proteins. Isoform early E1A 32 kDa protein and isoform early E1A 26 kDa protein interact (via N-terminus) with CUL1 and E3 ubiquitin ligase RBX1; these interactions inhibit RBX1-CUL1-dependent elongation reaction of ubiquitin chains and attenuate ubiquitination of SCF(FBXW7) target proteins. Interacts (via PXLXP motif) with host ZMYND11/BS69 (via MYND-type zinc finger); this interaction inhibits E1A mediated transactivation. Interacts with host EP300; this interaction stimulates the acetylation of RB1 by recruiting EP300 and RB1 into a multimeric-protein complex. Interacts with host CTBP1 and CTBP2; this interaction seems to potentiate viral replication. Interacts with host DCAF7. Interacts with host DYRK1A. Interacts with host KPNA4; this interaction allows E1A import into the host nucleus. Interacts with host EP400; this interaction stabilizes MYC. Interacts (via LXCXE motif) with host TMEM173/STING; this interaction impairs the ability of TMEM173/STING to sense cytosolic DNA and promote the production of type I interferon (IFN-alpha and IFN-beta). Interacts (via C-terminus) with host ZBED1/hDREF (via C-terminus); the interaction is direct.

The protein resides in the host nucleus. In terms of biological role, plays a role in viral genome replication by driving entry of quiescent cells into the cell cycle. Stimulation of progression from G1 to S phase allows the virus to efficiently use the cellular DNA replicating machinery to achieve viral genome replication. E1A protein has both transforming and trans-activating activities. Induces the disassembly of the E2F1 transcription factor from RB1 by direct competition for the same binding site on RB1, with subsequent transcriptional activation of E2F1-regulated S-phase genes and of the E2 region of the adenoviral genome. Release of E2F1 leads to the ARF-mediated inhibition of MDM2 and causes TP53/p53 to accumulate because it is not targeted for degradation by MDM2-mediated ubiquitination anymore. This increase in TP53, in turn, would arrest the cell proliferation and direct its death but this effect is counteracted by the viral protein E1B-55K. Inactivation of the ability of RB1 to arrest the cell cycle is critical for cellular transformation, uncontrolled cellular growth and proliferation induced by viral infection. Interaction with RBX1 and CUL1 inhibits ubiquitination of the proteins targeted by SCF(FBXW7) ubiquitin ligase complex, and may be linked to unregulated host cell proliferation. The tumorigenesis-restraining activity of E1A may be related to the disruption of the host CtBP-CtIP complex through the CtBP binding motif. Interacts with host TBP protein; this interaction probably disrupts the TBP-TATA complex. Interaction with host TMEM173/STING impairs the ability of TMEM173/STING to sense cytosolic DNA and promote the production of type I interferon (IFN-alpha and IFN-beta). Promotes the sumoylation of host ZBED1/hDREF with SUMO1. The protein is Early E1A protein of Homo sapiens (Human).